Reading from the N-terminus, the 266-residue chain is Glutaconate CoA-transferase subunit B (266 aa).

The active site involves E54.

Belongs to the 3-oxoacid CoA-transferase subunit B family. In terms of assembly, heterooctamer of four A and four B subunits.

The protein resides in the cytoplasm. The catalysed reaction is trans-glutaconate + acetyl-CoA = (2E)-glutaconyl-CoA + acetate. The protein operates within amino-acid degradation; L-glutamate degradation via hydroxyglutarate pathway; crotonoyl-CoA from L-glutamate: step 3/5. Functionally, catalyzes the transfer of the CoA moiety from acetyl-CoA to (R)-2-hydroxyglutarate and related compounds like glutaconate. This Acidaminococcus fermentans (strain ATCC 25085 / DSM 20731 / CCUG 9996 / CIP 106432 / VR4) protein is Glutaconate CoA-transferase subunit B (gctB).